The chain runs to 60 residues: MAVQQNKKSPSKRGMHRSHNALNVPGIAVESTTGEIHLRHHISPTGFYRGRKVLKTKAEA.

The disordered stretch occupies residues 1–25 (MAVQQNKKSPSKRGMHRSHNALNVP). Residues 9-19 (SPSKRGMHRSH) show a composition bias toward basic residues.

Belongs to the bacterial ribosomal protein bL32 family.

The protein is Large ribosomal subunit protein bL32 of Polaromonas naphthalenivorans (strain CJ2).